A 234-amino-acid polypeptide reads, in one-letter code: Zinc finger FYVE domain-containing protein 21 (234 aa).

Residues 44–104 (DKECPRCMQC…QCADCALVSH (61 aa)) form an FYVE-type zinc finger. Positions 50, 53, 66, 69, 74, 77, 96, and 99 each coordinate Zn(2+). A PH-like region spans residues 107 to 234 (AEFYDKQLKV…TKLLYESRDQ (128 aa)).

Interacts with PTK2/FAK1.

It is found in the cell junction. The protein resides in the focal adhesion. The protein localises to the cytoplasmic vesicle. It localises to the endosome. Plays a role in cell adhesion, and thereby in cell motility which requires repeated formation and disassembly of focal adhesions. Regulates microtubule-induced PTK2/FAK1 dephosphorylation, an event important for focal adhesion disassembly, as well as integrin beta-1/ITGB1 cell surface expression. The chain is Zinc finger FYVE domain-containing protein 21 (Zfyve21) from Rattus norvegicus (Rat).